The following is a 355-amino-acid chain: Peptide chain release factor 1 (355 aa).

The residue at position 231 (Gln231) is an N5-methylglutamine. Residues 283-303 (NAQNKEARKTQVGSGDRSERI) are disordered.

The protein belongs to the prokaryotic/mitochondrial release factor family. In terms of processing, methylated by PrmC. Methylation increases the termination efficiency of RF1.

It localises to the cytoplasm. In terms of biological role, peptide chain release factor 1 directs the termination of translation in response to the peptide chain termination codons UAG and UAA. The protein is Peptide chain release factor 1 of Helicobacter hepaticus (strain ATCC 51449 / 3B1).